We begin with the raw amino-acid sequence, 343 residues long: GTPase Obg (343 aa).

The Obg domain maps to 1-159; that stretch reads MKFLDQAKVY…LNIWLRLKLI (159 aa). Positions 160–327 constitute an OBG-type G domain; sequence ADAGLVGLPN…VLRALMTVIA (168 aa). GTP contacts are provided by residues 166 to 173, 191 to 195, 212 to 215, 279 to 282, and 308 to 310; these read GLPNAGKS, FTTLH, DIPG, SQVD, and SAV. Residues serine 173 and threonine 193 each coordinate Mg(2+).

This sequence belongs to the TRAFAC class OBG-HflX-like GTPase superfamily. OBG GTPase family. Monomer. It depends on Mg(2+) as a cofactor.

The protein localises to the cytoplasm. Functionally, an essential GTPase which binds GTP, GDP and possibly (p)ppGpp with moderate affinity, with high nucleotide exchange rates and a fairly low GTP hydrolysis rate. Plays a role in control of the cell cycle, stress response, ribosome biogenesis and in those bacteria that undergo differentiation, in morphogenesis control. The polypeptide is GTPase Obg (Mesorhizobium japonicum (strain LMG 29417 / CECT 9101 / MAFF 303099) (Mesorhizobium loti (strain MAFF 303099))).